The chain runs to 367 residues: Quinolinate synthase (367 aa).

Iminosuccinate-binding residues include His45 and Ser62. Cys109 contributes to the [4Fe-4S] cluster binding site. Iminosuccinate-binding positions include Tyr140–Asn142 and Ser161. [4Fe-4S] cluster is bound at residue Cys229. Residues His255–Glu257 and Thr272 contribute to the iminosuccinate site. Cys319 is a [4Fe-4S] cluster binding site.

It belongs to the quinolinate synthase family. Type 3 subfamily. [4Fe-4S] cluster is required as a cofactor.

The protein resides in the cytoplasm. It carries out the reaction iminosuccinate + dihydroxyacetone phosphate = quinolinate + phosphate + 2 H2O + H(+). It functions in the pathway cofactor biosynthesis; NAD(+) biosynthesis; quinolinate from iminoaspartate: step 1/1. In terms of biological role, catalyzes the condensation of iminoaspartate with dihydroxyacetone phosphate to form quinolinate. The chain is Quinolinate synthase from Lysinibacillus sphaericus (strain C3-41).